A 330-amino-acid polypeptide reads, in one-letter code: Stomatin-1 (330 aa).

Over residues 1-19 (MQPSETVEMQEMAQPSGQQ) the composition is skewed to polar residues. The interval 1–27 (MQPSETVEMQEMAQPSGQQRDVEARVQ) is disordered. The helical transmembrane segment at 42–62 (MFCIAMSYVLIFLTFPVSVFM) threads the bilayer.

This sequence belongs to the band 7/mec-2 family.

The protein resides in the membrane. The sequence is that of Stomatin-1 (sto-1) from Caenorhabditis elegans.